A 207-amino-acid chain; its full sequence is NADH-quinone oxidoreductase subunit A (207 aa).

3 consecutive transmembrane segments (helical) span residues 6-26, 62-82, and 87-107; these read LSAI…LVVP, LVAI…AYAV, and AGWL…IGLV.

This sequence belongs to the complex I subunit 3 family. In terms of assembly, NDH-1 is composed of 14 different subunits. Subunits NuoA, H, J, K, L, M, N constitute the membrane sector of the complex.

Its subcellular location is the cell inner membrane. The enzyme catalyses a quinone + NADH + 5 H(+)(in) = a quinol + NAD(+) + 4 H(+)(out). NDH-1 shuttles electrons from NADH, via FMN and iron-sulfur (Fe-S) centers, to quinones in the respiratory chain. The immediate electron acceptor for the enzyme in this species is believed to be ubiquinone. Couples the redox reaction to proton translocation (for every two electrons transferred, four hydrogen ions are translocated across the cytoplasmic membrane), and thus conserves the redox energy in a proton gradient. The protein is NADH-quinone oxidoreductase subunit A of Psychrobacter cryohalolentis (strain ATCC BAA-1226 / DSM 17306 / VKM B-2378 / K5).